Reading from the N-terminus, the 93-residue chain is Bombyxin-related peptide B (93 aa).

Positions 1–21 (MKFVLVLVSLALLVSLASVQG) are cleaved as a signal peptide. Intrachain disulfides connect Cys25-Cys80, Cys37-Cys93, and Cys79-Cys84. The propeptide at 47-71 (SGAMGAAAMYGTRGWRWAAMGGNRG) is c peptide like.

It belongs to the insulin family. As to quaternary structure, heterodimer of a B chain and an A chain linked by two disulfide bonds. Located in 4 pairs of medial neurosecretory cells in the brain.

It is found in the secreted. The chain is Bombyxin-related peptide B from Agrius convolvuli (Convolvulus hawk-moth).